The chain runs to 148 residues: FAD synthase (148 aa).

Residues valine 14–phenylalanine 15, histidine 19–histidine 22, and aspartate 100 contribute to the ATP site.

This sequence belongs to the archaeal FAD synthase family. Homodimer. The cofactor is a divalent metal cation.

The enzyme catalyses FMN + ATP + H(+) = FAD + diphosphate. It functions in the pathway cofactor biosynthesis; FAD biosynthesis; FAD from FMN: step 1/1. In terms of biological role, catalyzes the transfer of the AMP portion of ATP to flavin mononucleotide (FMN) to produce flavin adenine dinucleotide (FAD) coenzyme. In Pyrococcus abyssi (strain GE5 / Orsay), this protein is FAD synthase.